The primary structure comprises 140 residues: MPTINQLVRNGRTDKVWKSKSPALNKGFNSLKKKSTDISAPQKRGVCTRVGTMTPKKPNSALRKYARVRLTNGIEVTAYIPGIGHNLQEHSVVLIRGGRVKDLPGVRYHIVRGALDTAGVDKRMQGRSKYGTKRPKPAKK.

Asp102 is modified (3-methylthioaspartic acid).

It belongs to the universal ribosomal protein uS12 family. As to quaternary structure, part of the 30S ribosomal subunit. Contacts proteins S8 and S17. May interact with IF1 in the 30S initiation complex.

Functionally, with S4 and S5 plays an important role in translational accuracy. Its function is as follows. Interacts with and stabilizes bases of the 16S rRNA that are involved in tRNA selection in the A site and with the mRNA backbone. Located at the interface of the 30S and 50S subunits, it traverses the body of the 30S subunit contacting proteins on the other side and probably holding the rRNA structure together. The combined cluster of proteins S8, S12 and S17 appears to hold together the shoulder and platform of the 30S subunit. The sequence is that of Small ribosomal subunit protein uS12 from Bacillus cereus (strain G9842).